We begin with the raw amino-acid sequence, 187 residues long: Glutathione-dependent formaldehyde-activating enzyme (187 aa).

Residues 20–167 (FAGGTLVCKC…LKELGLEPYD (148 aa)) form the CENP-V/GFA domain. 7 residues coordinate Zn(2+): Cys-27, Cys-29, Cys-48, Cys-50, Cys-53, Cys-95, and Cys-98.

It belongs to the Gfa family. Requires Zn(2+) as cofactor.

The enzyme catalyses S-(hydroxymethyl)glutathione = glutathione + formaldehyde. It functions in the pathway one-carbon metabolism; formaldehyde degradation; formate from formaldehyde (glutathione route): step 1/3. Catalyzes the condensation of formaldehyde and glutathione to S-hydroxymethylglutathione. The protein is Glutathione-dependent formaldehyde-activating enzyme of Bradyrhizobium sp. (strain BTAi1 / ATCC BAA-1182).